The chain runs to 186 residues: uncharacterized protein (186 aa).

Residues 1-21 form the signal peptide; sequence MIHVKYIILGFIMVSSLNLYA.

This is an uncharacterized protein from Rickettsia conorii (strain ATCC VR-613 / Malish 7).